A 448-amino-acid polypeptide reads, in one-letter code: MHFIAISINHRTADVALREQVTFRDDALRIAHEDLYETKSILENVILSTCNRTEVYAVVDQIHTGRYYIQRFLARAFGFEVDDIKAMSEVKVGDEAVEHLLRVTSGLDSIVLGETQILGQIRDAFFLAQSTGTTGTIFNHLFKQAITFAKRAHNETDIADNAVSVSYAAVELAKKVFGKLKSKQAIIIGAGEMSELSLLNLLGSGITDITVVNRTIENAMKLAAKHQVKYDELSSLPNLLESADIVISSTSAQSYIITNEMIERIAENRKQDSLVLIDIAVPRDIEPGISAITNIFNYDVDDLKGLVDANLRERQLAAATISEQIPTEIHAHNEWISMLGVVPVIRALREKAMAIQAETMDSIDRKLPGLSERERKIISKHTKSIINQMLKDPIKQAKELSSDKKSNEKLELFQNIFDIEAECPHEQAKQQKESKVKEISARRIFSFE.

Substrate is bound by residues 49 to 52, Ser-109, 114 to 116, and Gln-120; these read TCNR and ETQ. Catalysis depends on Cys-50, which acts as the Nucleophile. NADP(+) is bound at residue 189 to 194; the sequence is GAGEMS.

The protein belongs to the glutamyl-tRNA reductase family. In terms of assembly, homodimer.

The enzyme catalyses (S)-4-amino-5-oxopentanoate + tRNA(Glu) + NADP(+) = L-glutamyl-tRNA(Glu) + NADPH + H(+). It participates in porphyrin-containing compound metabolism; protoporphyrin-IX biosynthesis; 5-aminolevulinate from L-glutamyl-tRNA(Glu): step 1/2. In terms of biological role, catalyzes the NADPH-dependent reduction of glutamyl-tRNA(Glu) to glutamate 1-semialdehyde (GSA). The protein is Glutamyl-tRNA reductase of Staphylococcus aureus (strain NCTC 8325 / PS 47).